Consider the following 393-residue polypeptide: MVTPKLHLDLSLTKKMKDHIHEHDHMVQICGEVSSGETSLVGIKKTCGEAPCGFSDAKTSSIEAQERAASMRKLLIAVLLCAIFIVVEVVGGIKANSLAILTDAAHLLSDVAAFAISLFSLWASGWKANPQQSYGFFRIEILGALVSIQMIWLLAGILVYEAIVRLNNGSGEVEGSLMFAVSAVGLLVNIAMAILLGHDHGHGHGHSHDNGHGHSHDHGHGIAATEHHHDSGHDESQLSDVLIEQKKQRNVNIQGAYLHVLGDSIQSVGVMIGGAIIWYKPEWKILDLICTLVFSVIVLGTTIGMLRNILEVLMESTPREIDPTMLEKGVCEIEEVVAVHELHIWAITVGKLLLACHVKIRPEAEADMVLDKIIDYIKREHNISHVTIQIERQ.

Over 1–72 (MVTPKLHLDL…EAQERAASMR (72 aa)) the chain is Cytoplasmic. The chain crosses the membrane as a helical span at residues 73–93 (KLLIAVLLCAIFIVVEVVGGI). The Vacuolar segment spans residues 94 to 105 (KANSLAILTDAA). The helical transmembrane segment at 106–126 (HLLSDVAAFAISLFSLWASGW) threads the bilayer. Residues 127 to 138 (KANPQQSYGFFR) are Cytoplasmic-facing. Residues 139 to 159 (IEILGALVSIQMIWLLAGILV) form a helical membrane-spanning segment. At 160 to 176 (YEAIVRLNNGSGEVEGS) the chain is on the vacuolar side. A helical transmembrane segment spans residues 177–197 (LMFAVSAVGLLVNIAMAILLG). Positions 198–233 (HDHGHGHGHSHDNGHGHSHDHGHGIAATEHHHDSGH) are required for zinc-binding. At 198–257 (HDHGHGHGHSHDNGHGHSHDHGHGIAATEHHHDSGHDESQLSDVLIEQKKQRNVNIQGAY) the chain is on the cytoplasmic side. Basic and acidic residues predominate over residues 202-236 (HGHGHSHDNGHGHSHDHGHGIAATEHHHDSGHDES). The interval 202–237 (HGHGHSHDNGHGHSHDHGHGIAATEHHHDSGHDESQ) is disordered. The helical transmembrane segment at 258 to 278 (LHVLGDSIQSVGVMIGGAIIW) threads the bilayer. Over 279-284 (YKPEWK) the chain is Vacuolar. A helical transmembrane segment spans residues 285–305 (ILDLICTLVFSVIVLGTTIGM). Residues 306–393 (LRNILEVLME…SHVTIQIERQ (88 aa)) are Cytoplasmic-facing.

It belongs to the cation diffusion facilitator (CDF) transporter (TC 2.A.4) family. SLC30A subfamily.

The protein localises to the membrane. In terms of biological role, involved in sequestration of excess zinc in the cytoplasm into vacuoles to maintain zinc homeostasis. This chain is Metal tolerance protein A2 (MTPA2), found in Arabidopsis thaliana (Mouse-ear cress).